The chain runs to 156 residues: MMSDVELVFKDESDCLVVIMGHVVTRLLSYRQLHHLTPESAGVLIGERRGQHLVVCDISEPGSGDIRQRCRVDRRGVHHQSRVNEAFERSAGTHLYLGEWHTHPEDRPFPSATDRHSWRRNIVSDESMLLLIVGRKDFWLGKKERELITVFKKIES.

The 141-residue stretch at 16-156 (LVVIMGHVVT…LITVFKKIES (141 aa)) folds into the MPN domain. The active-site Proton donor/acceptor is the glutamate 39. The Zn(2+) site is built by histidine 101, histidine 103, and aspartate 114. The JAMM motif motif lies at 101–114 (HTHPEDRPFPSATD).

This sequence belongs to the peptidase M67B family. Cap3 isopeptidase subfamily. Zn(2+) is required as a cofactor.

Its activity is regulated as follows. Cleavage of conjugated proteins is inhibited by EDTA. Metalloprotease priming reversal component of a CBASS system. CBASS (cyclic oligonucleotide-based antiphage signaling system) provides immunity against bacteriophages. The CD-NTase protein (DncV) synthesizes cyclic nucleotides in response to infection; these serve as specific second messenger signals. The signals activate a diverse range of effectors, leading to bacterial cell death and thus abortive phage infection. A type II-A(GA) CBASS system. Its function is as follows. Reverses the primed state of DncV, the CD-NTase. Cleaves a DncV-GFP (green fluorescent protein) fusion protein precisely at the C-terminus of DncV. Overexpression decreases the efficacy of CBASS protection against phages T2, T4, T5 and T6, blocks formation of DncV-conjugates in vivo, and inhibits in vivo activation of DncV. Antagonism of phage defense upon overexpression is CBASS-system specific, Cap3 from this bacteria only antagonizes its cognate CBASS system and not that of C.freundii, E.coli or E.hormaechei. Functionally, protects E.coli against phage infection. When the CBASS operon (capV-dncV-cap2-cap3) is introduced in E.coli MG1655 there is about 100-fold protection against phages P1 and T2. When the operon is introduced in E.coli MG1655 there is a more than 10(3) decrease in the efficiency of T2 plaque formation. Protects 100-fold against phage T5, offers no protection against T7. When the operon is introduced in E.coli MG1655 it protects against phages T2, T4, T5 and T6. Another paper shows the operon confers protection against phages P1, T2, T5 and T6 but not T4 or lambda. This is CD-NTase/cGAS isopeptidase from Vibrio cholerae serotype O1 (strain ATCC 39315 / El Tor Inaba N16961).